A 236-amino-acid chain; its full sequence is MTPRLFALIPCAGTGSRSGSAVPKQYRTLAGRALLHYTLAAFDACSEFAQTLVVLAPDDTHFDARRFAGLRFAVRRCGGASRQASVLNGLLGLAEFGAADHDWVLVHDAARPGITPELIRTLVATLKDDPVGGIVALPVADTLKRVPAGGDAIARTEPRDALWQAQTPQMFRIGMLRDAIQRAQREGHDLTDEASAIEWSGHTPRVVQGSLRNFKVTYPEDFALAEAILARAANAS.

This sequence belongs to the IspD/TarI cytidylyltransferase family. IspD subfamily.

It carries out the reaction 2-C-methyl-D-erythritol 4-phosphate + CTP + H(+) = 4-CDP-2-C-methyl-D-erythritol + diphosphate. The protein operates within isoprenoid biosynthesis; isopentenyl diphosphate biosynthesis via DXP pathway; isopentenyl diphosphate from 1-deoxy-D-xylulose 5-phosphate: step 2/6. Its function is as follows. Catalyzes the formation of 4-diphosphocytidyl-2-C-methyl-D-erythritol from CTP and 2-C-methyl-D-erythritol 4-phosphate (MEP). In Burkholderia multivorans (strain ATCC 17616 / 249), this protein is 2-C-methyl-D-erythritol 4-phosphate cytidylyltransferase.